Reading from the N-terminus, the 513-residue chain is Beta-glucosidase 5 (513 aa).

An N-terminal signal peptide occupies residues 1 to 26 (MAAAIAVVYLSLLLLLLHGAAPAVLG). Q46 provides a ligand contact to a beta-D-glucoside. The active-site Proton donor is the E192. Cysteines 211 and 220 form a disulfide. N-linked (GlcNAc...) asparagine glycans are attached at residues N224 and N273. The a beta-D-glucoside site is built by Y336 and E405. E405 (nucleophile) is an active-site residue. N-linked (GlcNAc...) asparagine glycosylation occurs at N412. A beta-D-glucoside is bound by residues W447, 454-455 (EY), and Y463.

Belongs to the glycosyl hydrolase 1 family.

It catalyses the reaction Hydrolysis of terminal, non-reducing beta-D-glucosyl residues with release of beta-D-glucose.. The sequence is that of Beta-glucosidase 5 (BGLU5) from Oryza sativa subsp. japonica (Rice).